Reading from the N-terminus, the 431-residue chain is Mothers against decapentaplegic homolog 6 (431 aa).

Over residues 1 to 15 the composition is skewed to basic residues; sequence MFRSKRSGLVRRLWR. The segment at 1–95 is disordered; sequence MFRSKRSGLV…SPPGPGGGEA (95 aa). A compositionally biased stretch (polar residues) spans 29–38; sequence GQSSERNATA. Pro residues predominate over residues 71–90; it reads PELPPPPPPPPPGGASPPGP. Positions 85 to 209 constitute an MH1 domain; the sequence is ASPPGPGGGE…FSRLCGPESP (125 aa). Zn(2+) contacts are provided by Cys-139, Cys-182, Cys-194, and His-199. Residues 235–245 are compositionally biased toward polar residues; the sequence is TETEATNSPNV. Residues 235 to 258 form a disordered region; that stretch reads TETEATNSPNVTPGEFSDASTSPD. Residues 265 to 431 form the MH2 domain; it reads WCNVAYWEHR…WLEILLSNNR (167 aa).

The protein belongs to the dwarfin/SMAD family. As to expression, developing heart, eyes and limbs.

The protein resides in the nucleus. Its function is as follows. Transforming growth factor-beta superfamily receptors signaling occurs through the Smad family of intracellular mediators. SMAD6 is an inhibitory Smad (i-Smad) that negatively regulates signaling downstream of type I transforming growth factor-beta. Acts as a mediator of TGF-beta and BMP anti-inflammatory activities. Suppresses IL1R-TLR signaling through its direct interaction with PEL1, preventing NF-kappa-B activation, nuclear transport and NF-kappa-B-mediated expression of pro-inflammatory genes. Blocks the BMP-SMAD1 signaling pathway by competing with SMAD4 for receptor-activated SMAD1-binding. Binds to regulatory elements in target promoter regions. This chain is Mothers against decapentaplegic homolog 6 (SMAD6), found in Gallus gallus (Chicken).